Here is a 433-residue protein sequence, read N- to C-terminus: UPF0597 protein Spea_0809 (433 aa).

Belongs to the UPF0597 family.

The protein is UPF0597 protein Spea_0809 of Shewanella pealeana (strain ATCC 700345 / ANG-SQ1).